The following is a 281-amino-acid chain: Protoheme IX farnesyltransferase (281 aa).

The next 9 helical transmembrane spans lie at 16–36, 38–58, 75–95, 101–121, 129–149, 150–170, 202–224, 228–250, and 261–281; these read TFLL…GADF, FVIA…INMW, VPAG…IFAI, FLVS…DIVV, KSPY…LGGW, VAVQ…LLWI, ASWA…YVLL, IFYL…KFAL, and YKLA…GVFL.

Belongs to the UbiA prenyltransferase family. Protoheme IX farnesyltransferase subfamily.

The protein localises to the cell membrane. The catalysed reaction is heme b + (2E,6E)-farnesyl diphosphate + H2O = Fe(II)-heme o + diphosphate. It functions in the pathway porphyrin-containing compound metabolism; heme O biosynthesis; heme O from protoheme: step 1/1. Its function is as follows. Converts heme B (protoheme IX) to heme O by substitution of the vinyl group on carbon 2 of heme B porphyrin ring with a hydroxyethyl farnesyl side group. This chain is Protoheme IX farnesyltransferase, found in Archaeoglobus fulgidus (strain ATCC 49558 / DSM 4304 / JCM 9628 / NBRC 100126 / VC-16).